A 272-amino-acid chain; its full sequence is Shikimate dehydrogenase (NADP(+)) (272 aa).

Shikimate-binding positions include S14–S16 and T61. The active-site Proton acceptor is K65. NADP(+) is bound at residue E77. Shikimate-binding residues include N86 and D102. Residues G126–A130, N149–R154, and M213 each bind NADP(+). Y215 is a binding site for shikimate. G237 is an NADP(+) binding site.

The protein belongs to the shikimate dehydrogenase family. As to quaternary structure, homodimer.

It carries out the reaction shikimate + NADP(+) = 3-dehydroshikimate + NADPH + H(+). It functions in the pathway metabolic intermediate biosynthesis; chorismate biosynthesis; chorismate from D-erythrose 4-phosphate and phosphoenolpyruvate: step 4/7. Functionally, involved in the biosynthesis of the chorismate, which leads to the biosynthesis of aromatic amino acids. Catalyzes the reversible NADPH linked reduction of 3-dehydroshikimate (DHSA) to yield shikimate (SA). The protein is Shikimate dehydrogenase (NADP(+)) of Shigella boydii serotype 18 (strain CDC 3083-94 / BS512).